Reading from the N-terminus, the 417-residue chain is Putative nickel insertion protein (417 aa).

The interval 69–99 (HEHHHDHGHHHHGHGHHHDHTHDHHHHHEHR) is disordered. The span at 74-99 (DHGHHHHGHGHHHDHTHDHHHHHEHR) shows a compositional bias: basic residues.

The protein belongs to the LarC family.

The chain is Putative nickel insertion protein from Maridesulfovibrio salexigens (strain ATCC 14822 / DSM 2638 / NCIMB 8403 / VKM B-1763) (Desulfovibrio salexigens).